Reading from the N-terminus, the 154-residue chain is D-ribose pyranase 2 (154 aa).

H20 serves as the catalytic Proton donor. Substrate-binding positions include D28, H98, and 121-123; that span reads WGN.

This sequence belongs to the RbsD / FucU family. RbsD subfamily. As to quaternary structure, homodecamer.

The protein localises to the cytoplasm. It carries out the reaction beta-D-ribopyranose = beta-D-ribofuranose. It functions in the pathway carbohydrate metabolism; D-ribose degradation; D-ribose 5-phosphate from beta-D-ribopyranose: step 1/2. Functionally, catalyzes the interconversion of beta-pyran and beta-furan forms of D-ribose. The protein is D-ribose pyranase 2 of Rubrobacter xylanophilus (strain DSM 9941 / JCM 11954 / NBRC 16129 / PRD-1).